Reading from the N-terminus, the 274-residue chain is Undecaprenyl-diphosphatase (274 aa).

Transmembrane regions (helical) follow at residues 9-29 (LEYL…FIPV), 47-67 (PGAS…AWYF), 95-115 (ILIG…FVPY), 120-140 (VLRS…FMYL), 161-181 (LIGF…GITI), 197-217 (FSFL…FISS), 224-244 (LGFF…LLAI), and 254-274 (NGLK…LLNL).

The protein belongs to the UppP family.

Its subcellular location is the cell inner membrane. The enzyme catalyses di-trans,octa-cis-undecaprenyl diphosphate + H2O = di-trans,octa-cis-undecaprenyl phosphate + phosphate + H(+). Functionally, catalyzes the dephosphorylation of undecaprenyl diphosphate (UPP). Confers resistance to bacitracin. The chain is Undecaprenyl-diphosphatase from Prochlorococcus marinus (strain AS9601).